Consider the following 360-residue polypeptide: Phosphoserine aminotransferase (360 aa).

Arg-42 is an L-glutamate binding site. 4 residues coordinate pyridoxal 5'-phosphate: Trp-102, Thr-152, Asp-171, and Gln-194. N6-(pyridoxal phosphate)lysine is present on Lys-195. 237–238 (NT) lines the pyridoxal 5'-phosphate pocket.

This sequence belongs to the class-V pyridoxal-phosphate-dependent aminotransferase family. SerC subfamily. As to quaternary structure, homodimer. Pyridoxal 5'-phosphate serves as cofactor.

The protein resides in the cytoplasm. The catalysed reaction is O-phospho-L-serine + 2-oxoglutarate = 3-phosphooxypyruvate + L-glutamate. The enzyme catalyses 4-(phosphooxy)-L-threonine + 2-oxoglutarate = (R)-3-hydroxy-2-oxo-4-phosphooxybutanoate + L-glutamate. It participates in amino-acid biosynthesis; L-serine biosynthesis; L-serine from 3-phospho-D-glycerate: step 2/3. Its pathway is cofactor biosynthesis; pyridoxine 5'-phosphate biosynthesis; pyridoxine 5'-phosphate from D-erythrose 4-phosphate: step 3/5. Functionally, catalyzes the reversible conversion of 3-phosphohydroxypyruvate to phosphoserine and of 3-hydroxy-2-oxo-4-phosphonooxybutanoate to phosphohydroxythreonine. This chain is Phosphoserine aminotransferase, found in Coxiella burnetii (strain RSA 493 / Nine Mile phase I).